Reading from the N-terminus, the 92-residue chain is Small ribosomal subunit protein bS20 (92 aa).

The tract at residues 1–25 is disordered; the sequence is MANSAQARKRARQAAKANSHNSALR.

The protein belongs to the bacterial ribosomal protein bS20 family.

In terms of biological role, binds directly to 16S ribosomal RNA. The protein is Small ribosomal subunit protein bS20 of Burkholderia mallei (strain NCTC 10247).